The primary structure comprises 37 residues: Large ribosomal subunit protein bL36 (37 aa).

It belongs to the bacterial ribosomal protein bL36 family.

The sequence is that of Large ribosomal subunit protein bL36 from Bacillus anthracis (strain A0248).